A 167-amino-acid polypeptide reads, in one-letter code: Ubiquitin-fold modifier-conjugating enzyme 1 (167 aa).

The Glycyl thioester intermediate role is filled by Cys116. Residue Lys122 forms a Glycyl lysine isopeptide (Lys-Gly) (interchain with G-Cter in UFM1) linkage.

The protein belongs to the ubiquitin-conjugating enzyme family. UFC1 subfamily. Interacts with UBA5 (via C-terminus). Interacts with UFL1. Interacts with UFM1. Interacts with KIRREL3. Ufmylated at Lys-122. Deufmylated by UFSP1.

E2-like enzyme which specifically catalyzes the second step in ufmylation. Accepts the ubiquitin-like modifier UFM1 from the E1 enzyme UBA5 and forms an intermediate with UFM1 via a thioester linkage. Ufmylation is involved in various processes, such as ribosome recycling, response to DNA damage, interferon response or reticulophagy (also called ER-phagy). This is Ubiquitin-fold modifier-conjugating enzyme 1 from Mus musculus (Mouse).